A 162-amino-acid chain; its full sequence is UPF0114 protein SO_3997 (162 aa).

3 helical membrane-spanning segments follow: residues 10-32 (YASRWIMAPIYLGLSLVLLGLGI), 53-75 (LVLVTLSLIDITLVGGLIVMVMF), and 136-156 (IMWYLLIHITFVLSAFAMGYL).

It belongs to the UPF0114 family.

It localises to the cell membrane. The chain is UPF0114 protein SO_3997 from Shewanella oneidensis (strain ATCC 700550 / JCM 31522 / CIP 106686 / LMG 19005 / NCIMB 14063 / MR-1).